Reading from the N-terminus, the 547-residue chain is Regulator of G-protein signaling 14 (547 aa).

The interval 19-59 (VSDGELTSTAGSQAQGEGRGSSLSIHSLPSGPSSPFSTEEQ) is disordered. Phosphoserine occurs at positions 20, 42, 45, 143, 199, 203, and 218. Residues 23 to 58 (ELTSTAGSQAQGEGRGSSLSIHSLPSGPSSPFSTEE) show a composition bias toward polar residues. One can recognise an RGS domain in the interval 67–184 (SFERLLQDPR…VKSPLYQECL (118 aa)). The interval 191–220 (RPLREPGSSHLGSPDTARKKPKLKPGKSLP) is disordered. The residue at position 249 (T249) is a Phosphothreonine. S289 is subject to Phosphoserine. The necessary for interaction with RABGEF1 stretch occupies residues 300 to 427 (RPGKYCCVYL…LHRPGEKQPM (128 aa)). RBD domains follow at residues 303-374 (KYCC…LENR) and 376-446 (TFQL…LDTP). The segment at 447-496 (PDAKMSEARSISPCRSQGCLPRTQTKDSHLPPSSSSLLVEDASSSTGNRQ) is disordered. The segment covering 476 to 491 (LPPSSSSLLVEDASSS) has biased composition (low complexity). Positions 500-522 (IEGLVELLNRVQSSGAHDQRGLL) constitute a GoLoco domain.

In terms of assembly, interacts with GNAI1 and GNAI2. Interacts with GNAI3. Interacts with GNAO1. Interacts (via RGS and GoLoco domains) with GNAI1; the interaction occurs in the centrosomes. Interaction with GNAI1 or GNAI3 (via active GTP- or inactive GDP-bound forms) prevents association of RGS14 with centrosomes or nuclear localization. Interacts with RABGEF1; the interactions is GTP-dependent. Interacts with RAP2A; the interactions is GTP-dependent and does not alter its function on G(i) alpha subunits either as GAP or as GDI. Associates with microtubules. Found in a complex with at least BRAF, HRAS, MAP2K1, MAPK3 and RGS14. Interacts with RIC8A (via C-terminus). Interacts (via RBD 1 domain) with HRAS (active GTP-bound form preferentially). Interacts (via RBD domains) with BRAF (via N-terminus); the interaction mediates the formation of a ternary complex with RAF1. Interacts (via RBD domains) with RAF1 (via N-terminus); the interaction mediates the formation of a ternary complex with BRAF. Interacts with KRAS (active GTP-bound form preferentially), MRAS (active GTP-bound form preferentially), NRAS (active GTP-bound form preferentially) and RRAS (active GTP-bound form preferentially). Phosphorylated by PKC. Phosphorylation is increased in presence of forskolin and may enhance the GDI activity on G(i) alpha subunit GNAI1. As to expression, expressed in pyramidal neurons of the CA1, CA2 and fasciola cinerea (FC) subregions of the hippocampus and in the olfactory cortex (at protein level). Expressed in brain, spleen, heart, liver, lung, kidney, skin and thymus (at protein level). Expressed in granular layer of the cerebellum, forbrain, striatum, layer V of the cortex, olfactory cortex, tubercules, subthalamic and hippocampus, particularly in the CA2 region, to a lesser extent in the CA1 region and the external layer of the dentate gyrus. Expressed in neurons.

It is found in the nucleus. It localises to the PML body. The protein localises to the cytoplasm. Its subcellular location is the membrane. The protein resides in the cell membrane. It is found in the cytoskeleton. It localises to the spindle. The protein localises to the spindle pole. Its subcellular location is the microtubule organizing center. The protein resides in the centrosome. It is found in the cell projection. It localises to the dendrite. The protein localises to the dendritic spine. Its subcellular location is the postsynaptic density. In terms of biological role, regulates G protein-coupled receptor signaling cascades. Inhibits signal transduction by increasing the GTPase activity of G protein alpha subunits, thereby driving them into their inactive GDP-bound form. Besides, modulates signal transduction via G protein alpha subunits by functioning as a GDP-dissociation inhibitor (GDI). Has GDI activity on G(i) alpha subunits GNAI1 and GNAI3, but not on GNAI2 and G(o)-alpha subunit GNAO1. Has GAP activity on GNAI0, GNAI2 and GNAI3. May act as a scaffold integrating G protein and Ras/Raf MAPkinase signaling pathways. Inhibits platelet-derived growth factor (PDGF)-stimulated ERK1/ERK2 phosphorylation; a process depending on its interaction with HRAS and that is reversed by G(i) alpha subunit GNAI1. Acts as a positive modulator of microtubule polymerisation and spindle organization through a G(i)-alpha-dependent mechanism. Plays a role in cell division; required for completion of the first mitotic division of the embryo. Involved in visual memory processing capacity; when overexpressed in the V2 secondary visual cortex area. Involved in hippocampal-based learning and memory; acts as a suppressor of synaptic plasticity in CA2 neurons. Required for the nerve growth factor (NGF)-mediated neurite outgrowth. Involved in stress resistance. In Mus musculus (Mouse), this protein is Regulator of G-protein signaling 14 (Rgs14).